We begin with the raw amino-acid sequence, 303 residues long: Phosphatidylglycerol--prolipoprotein diacylglyceryl transferase (303 aa).

3 helical membrane-spanning segments follow: residues 18-38, 58-78, and 107-127; these read VGFF…LIGL, LLPI…VIFE, and WQGG…ILIF. Residue arginine 154 participates in a 1,2-diacyl-sn-glycero-3-phospho-(1'-sn-glycerol) binding. 2 helical membrane passes run 193-213 and 266-286; these read PTFL…ISLI and IAQL…FWIY.

Belongs to the Lgt family.

Its subcellular location is the cell inner membrane. The catalysed reaction is L-cysteinyl-[prolipoprotein] + a 1,2-diacyl-sn-glycero-3-phospho-(1'-sn-glycerol) = an S-1,2-diacyl-sn-glyceryl-L-cysteinyl-[prolipoprotein] + sn-glycerol 1-phosphate + H(+). Its pathway is protein modification; lipoprotein biosynthesis (diacylglyceryl transfer). Functionally, catalyzes the transfer of the diacylglyceryl group from phosphatidylglycerol to the sulfhydryl group of the N-terminal cysteine of a prolipoprotein, the first step in the formation of mature lipoproteins. In Prochlorococcus marinus (strain MIT 9211), this protein is Phosphatidylglycerol--prolipoprotein diacylglyceryl transferase.